A 305-amino-acid polypeptide reads, in one-letter code: MDYSVNKMQLPSPAKLNLFLHITGRREDGYHELQTLFQFIDLCDTLDFSLTRNNQITISPIIEQLPTEDNLIYKAAKLLTPFKKDSTFGIDIILTKQLPMGGGIGGGSSNAATALLALNVLWGCQLSLEKLAELGVQLGADIPVFVMGFAAFAEGVGEKLQKVELDTPYFLLIKPNCHVSTGQIFTDKYLTRDTPPIRISHALKLGGHNDCLDVVKKHNPEVNEAYLWLKNYGDAKLTGTGACLFLAFDNLRDAERVRSSTPTKWQSWVCRGCNTSPTHAALNQWIEQNRGVPHIKHHLSQSFLG.

The active site involves Lys15. 99-109 is a binding site for ATP; sequence PMGGGIGGGSS. Asp141 is an active-site residue.

This sequence belongs to the GHMP kinase family. IspE subfamily.

It catalyses the reaction 4-CDP-2-C-methyl-D-erythritol + ATP = 4-CDP-2-C-methyl-D-erythritol 2-phosphate + ADP + H(+). It functions in the pathway isoprenoid biosynthesis; isopentenyl diphosphate biosynthesis via DXP pathway; isopentenyl diphosphate from 1-deoxy-D-xylulose 5-phosphate: step 3/6. Catalyzes the phosphorylation of the position 2 hydroxy group of 4-diphosphocytidyl-2C-methyl-D-erythritol. This Marinomonas sp. (strain MWYL1) protein is 4-diphosphocytidyl-2-C-methyl-D-erythritol kinase.